A 124-amino-acid chain; its full sequence is NAD(P)H-quinone oxidoreductase subunit 5, chloroplastic (124 aa).

The next 3 helical transmembrane spans lie at 22–42 (TPIS…FLVA), 44–64 (LLPL…IGII), and 91–111 (LGYM…FHLI).

Belongs to the complex I subunit 5 family. NDH is composed of at least 16 different subunits, 5 of which are encoded in the nucleus.

It is found in the plastid. The protein resides in the chloroplast thylakoid membrane. It carries out the reaction a plastoquinone + NADH + (n+1) H(+)(in) = a plastoquinol + NAD(+) + n H(+)(out). It catalyses the reaction a plastoquinone + NADPH + (n+1) H(+)(in) = a plastoquinol + NADP(+) + n H(+)(out). NDH shuttles electrons from NAD(P)H:plastoquinone, via FMN and iron-sulfur (Fe-S) centers, to quinones in the photosynthetic chain and possibly in a chloroplast respiratory chain. The immediate electron acceptor for the enzyme in this species is believed to be plastoquinone. Couples the redox reaction to proton translocation, and thus conserves the redox energy in a proton gradient. In Pisum sativum (Garden pea), this protein is NAD(P)H-quinone oxidoreductase subunit 5, chloroplastic (ndhF).